A 484-amino-acid chain; its full sequence is Cathepsin F (484 aa).

The first 19 residues, 1–19 (MAPWLQLLSLLGLLPGAVA), serve as a signal peptide directing secretion. Residues 20–270 (APAQPRAASF…MKQAKSVGDL (251 aa)) constitute a propeptide, activation peptide. N-linked (GlcNAc...) asparagine glycans are attached at residues N160 and N195. 2 disulfide bridges follow: C292-C333 and C326-C366. Residue C295 is part of the active site. N-linked (GlcNAc...) asparagine glycans are attached at residues N367 and N378. C424 and C472 are oxidised to a cystine. Residue H431 is part of the active site. N-linked (GlcNAc...) asparagine glycosylation occurs at N440. N451 is a catalytic residue.

Belongs to the peptidase C1 family. As to expression, high expression levels in heart, skeletal muscle, brain, testis and ovary; moderate levels in prostate, placenta, liver and colon; and no detectable expression in peripheral leukocytes and thymus.

Its subcellular location is the lysosome. The enzyme catalyses The recombinant enzyme cleaves synthetic substrates with Phe and Leu (better than Val) in P2, with high specificity constant (kcat/Km) comparable to that of cathepsin L.. In terms of biological role, thiol protease which is believed to participate in intracellular degradation and turnover of proteins. Has also been implicated in tumor invasion and metastasis. The protein is Cathepsin F (CTSF) of Homo sapiens (Human).